A 288-amino-acid chain; its full sequence is Bis(5'-nucleosyl)-tetraphosphatase, symmetrical (288 aa).

It belongs to the Ap4A hydrolase family.

It carries out the reaction P(1),P(4)-bis(5'-adenosyl) tetraphosphate + H2O = 2 ADP + 2 H(+). In terms of biological role, hydrolyzes diadenosine 5',5'''-P1,P4-tetraphosphate to yield ADP. The protein is Bis(5'-nucleosyl)-tetraphosphatase, symmetrical of Pseudomonas putida (strain ATCC 700007 / DSM 6899 / JCM 31910 / BCRC 17059 / LMG 24140 / F1).